Consider the following 741-residue polypeptide: Aspartyl/asparaginyl beta-hydroxylase (741 aa).

Positions 1–54 (MAPRKNAKGGGGNSSSSGSGSGSGSGSPSTGSSGSSSSPGARREAKHGGHKNGR) are disordered. Topologically, residues 1–62 (MAPRKNAKGG…GRRGGISGGS (62 aa)) are cytoplasmic. A compositionally biased stretch (gly residues) spans 8 to 25 (KGGGGNSSSSGSGSGSGS). Ser15 is subject to Phosphoserine. Positions 26–40 (GSPSTGSSGSSSSPG) are enriched in low complexity. Residues 63 to 83 (FFTWFMVIALLGVWTSVAVVW) traverse the membrane as a helical; Signal-anchor for type II membrane protein segment. Residues 84-741 (FDLVDYEEVL…PQQRRSLPAI (658 aa)) are Lumenal-facing. Ca(2+)-binding residues include Asp100, Asp102, Asp104, Asp106, and Asp111. Disordered regions lie at residues 120-141 (ERSPSERTFPPEEEAETHAELE) and 222-244 (TASQNHPNDMEEMTNEQENSDPS). Acidic residues predominate over residues 231–242 (MEEMTNEQENSD). TPR repeat units follow at residues 324 to 357 (IKAELDAAEKLRKRGKIEEAVNAFEELVRKYPQS), 365 to 398 (AQCEDDLAEKQRSNEVLRRAIETYQEAADLPDAP), 437 to 470 (TTLKNDLGVGYLLLGDNDSAKKVYEEVLNVTPND), 472 to 504 (FAKVHYGFILKAQNKISESIPYLKEGIESGDPG), and 508 to 540 (GRFYFHLGDAMQRVGNKEAYKWYELGHKRGHFA). N-linked (GlcNAc...) asparagine glycosylation is present at Asn453. Trp608 lines the 2-oxoglutarate pocket. Residues Cys624 and Cys631 are joined by a disulfide bond. Residue Ser651 participates in 2-oxoglutarate binding. Residue His662 participates in Fe cation binding. 671–673 (RMH) is a binding site for 2-oxoglutarate. Asn689 is a glycosylation site (N-linked (GlcNAc...) asparagine). His708 serves as a coordination point for Fe cation. Arg718 provides a ligand contact to 2-oxoglutarate.

Belongs to the aspartyl/asparaginyl beta-hydroxylase family. In terms of assembly, monomer. Isoform 2 interacts with CASQ2. The cofactor is Fe cation. Isoform 1 is detected in heart, liver and ovary (at protein level). Detected in heart ventricle. Isoform 1 is widely expressed. Isoform 2 is detected in heart and skeletal muscle.

The protein resides in the endoplasmic reticulum membrane. It localises to the sarcoplasmic reticulum membrane. It catalyses the reaction L-aspartyl-[protein] + 2-oxoglutarate + O2 = 3-hydroxy-L-aspartyl-[protein] + succinate + CO2. Functionally, specifically hydroxylates an Asp or Asn residue in certain epidermal growth factor-like (EGF) domains of a number of proteins. This Mus musculus (Mouse) protein is Aspartyl/asparaginyl beta-hydroxylase (Asph).